The following is a 306-amino-acid chain: Elongation factor Ts (306 aa).

Residues 80-83 (TDFV) form an involved in Mg(2+) ion dislocation from EF-Tu region.

This sequence belongs to the EF-Ts family.

The protein resides in the cytoplasm. In terms of biological role, associates with the EF-Tu.GDP complex and induces the exchange of GDP to GTP. It remains bound to the aminoacyl-tRNA.EF-Tu.GTP complex up to the GTP hydrolysis stage on the ribosome. The protein is Elongation factor Ts of Methylorubrum extorquens (strain CM4 / NCIMB 13688) (Methylobacterium extorquens).